The primary structure comprises 378 residues: Alcohol dehydrogenase (378 aa).

Fe cation contacts are provided by aspartate 195, histidine 199, histidine 262, and histidine 274.

The protein belongs to the iron-containing alcohol dehydrogenase family. Fe(2+) serves as cofactor. The cofactor is Mn(2+).

The enzyme catalyses a primary alcohol + NAD(+) = an aldehyde + NADH + H(+). The catalysed reaction is butan-1-ol + NAD(+) = butanal + NADH + H(+). It carries out the reaction hexan-1-ol + NAD(+) = hexanal + NADH + H(+). It catalyses the reaction ethanol + NAD(+) = acetaldehyde + NADH + H(+). Its function is as follows. Thermostable type III alcohol dehydrogenase. For oxidation activity, the best substrates are 1-butanol and 1-hexanol, followed by ethanol. Shows lower activity with ethylene glycol, isopentanol, isopropanol and glycerol. Displays higher reduction activity in the presence of butanal, followed by acetaldehyde. Has lower activity with hexanal and acetone. The chain is Alcohol dehydrogenase from Thermococcus barophilus.